The chain runs to 365 residues: 1-aminocyclopropane-1-carboxylate oxidase homolog 9 (365 aa).

The Fe2OG dioxygenase domain maps to 214–313 (KGLLMLCHYY…RISVACFVSS (100 aa)). 3 residues coordinate Fe cation: His238, Asp240, and His294. Arg304 lines the 2-oxoglutarate pocket.

The protein belongs to the iron/ascorbate-dependent oxidoreductase family. The cofactor is Fe(2+).

The polypeptide is 1-aminocyclopropane-1-carboxylate oxidase homolog 9 (Arabidopsis thaliana (Mouse-ear cress)).